We begin with the raw amino-acid sequence, 1305 residues long: Serine protease EspC (1305 aa).

The N-terminal stretch at 1–53 (MNKIYALKYCHATGGLIAVSELASRVMKKAARGSLLALFNLSLYGAFLSASQA) is a signal peptide. Residues 55-297 (QLNIDNVWAR…SILNQYDENT (243 aa)) form the Peptidase S6 domain. Active-site charge relay system residues include His125, Asp153, and Ser256. Residues 1039–1305 (DTQGDAGVWA…AINANFRYSF (267 aa)) form the Autotransporter domain.

In terms of processing, cleaved to release the mature protein from the outer membrane.

It is found in the periplasm. Its subcellular location is the secreted. It localises to the cell surface. The protein localises to the cell outer membrane. Inhibition of cytotoxic activity by phenylmethylsulfonyl fluoride. In terms of biological role, serine protease with enterotoxic and cytotoxic activities. Cleaves fodrin, but does not cause its redistribution within epithelial cells. The exact role of EspC in EPEC pathogenesis is still unknown. This chain is Serine protease EspC (espC), found in Escherichia coli O127:H6 (strain E2348/69 / EPEC).